We begin with the raw amino-acid sequence, 208 residues long: Guanylate kinase (208 aa).

One can recognise a Guanylate kinase-like domain in the interval 4–182; sequence GQLYIISAPS…ALEELKSVFR (179 aa). Residue 11 to 18 participates in ATP binding; sequence APSGAGKT.

Belongs to the guanylate kinase family.

It localises to the cytoplasm. The catalysed reaction is GMP + ATP = GDP + ADP. In terms of biological role, essential for recycling GMP and indirectly, cGMP. This Hahella chejuensis (strain KCTC 2396) protein is Guanylate kinase.